We begin with the raw amino-acid sequence, 193 residues long: Imidazoleglycerol-phosphate dehydratase (193 aa).

Belongs to the imidazoleglycerol-phosphate dehydratase family.

It localises to the cytoplasm. It carries out the reaction D-erythro-1-(imidazol-4-yl)glycerol 3-phosphate = 3-(imidazol-4-yl)-2-oxopropyl phosphate + H2O. Its pathway is amino-acid biosynthesis; L-histidine biosynthesis; L-histidine from 5-phospho-alpha-D-ribose 1-diphosphate: step 6/9. This Staphylococcus carnosus (strain TM300) protein is Imidazoleglycerol-phosphate dehydratase.